The primary structure comprises 50 residues: Protein HokE (50 aa).

The chain crosses the membrane as a helical span at residues 5–25 (YALVAVIVLCLTVLGFTLLVG).

Belongs to the Hok/Gef family.

The protein localises to the cell inner membrane. Functionally, toxic component of a type I toxin-antitoxin (TA) system. When overexpressed kills cells within minutes; causes collapse of the transmembrane potential and arrest of respiration. Its toxic effect is probably neutralized by an antisense antitoxin Sok RNA. The protein is Protein HokE (hokE) of Escherichia coli O157:H7.